A 501-amino-acid chain; its full sequence is IQ domain-containing protein M (501 aa).

The span at 237–247 (ERQPIKPEPKS) shows a compositional bias: basic and acidic residues. Residues 237–262 (ERQPIKPEPKSQPRIKGTPNKTDKLD) form a disordered region. Residues 290–319 (LIRMVTVMQAHVRGWLERKRLQRVMTKALD) enclose the IQ domain.

This chain is IQ domain-containing protein M, found in Homo sapiens (Human).